A 555-amino-acid chain; its full sequence is GPI-anchor transamidase component PIGS (555 aa).

At 2–18 the chain is on the cytoplasmic side; the sequence is AAAGAAATDLEVVRGKR. A cardiolipin is bound by residues Arg-15 and Arg-18. Residues 19–39 form a helical membrane-spanning segment; that stretch reads SALFFAAVAILLGLPLWWKTT. Residues 40-517 lie on the Lumenal side of the membrane; the sequence is ETYRAPLPYS…LHLLYFPDDQ (478 aa). N-linked (GlcNAc...) asparagine glycosylation is found at Asn-267 and Asn-370. A helical membrane pass occupies residues 518–532; sequence KFAIYIPLFLPMAVP. The Cytoplasmic portion of the chain corresponds to 533-555; sequence ILLSLVKIFQETRKSWKKPEKID.

This sequence belongs to the PIGS family. Heteropentamer. Part of the GPI-anchor transamidase complex, consisting of PIGK, PIGT, PIGS, PIGU and GAA1.

The protein resides in the endoplasmic reticulum membrane. It participates in glycolipid biosynthesis; glycosylphosphatidylinositol-anchor biosynthesis. Functionally, component of the glycosylphosphatidylinositol-anchor (GPI-anchor) transamidase (GPI-T) complex that catalyzes the formation of the linkage between a proprotein and a GPI-anchor and participates in GPI anchored protein biosynthesis. This is GPI-anchor transamidase component PIGS from Mus musculus (Mouse).